We begin with the raw amino-acid sequence, 757 residues long: Polyribonucleotide nucleotidyltransferase (757 aa).

Residues D532 and D538 each contribute to the Mg(2+) site. In terms of domain architecture, KH spans 598 to 657; that stretch reads PRVTAIKVPVDKIGEVIGPKGKMINSITEQTGANISIEDDGTVFVGATDGPSAQAAIDMI. An S1 motif domain is found at 669 to 738; that stretch reads GERFLGTVVK…NRGKISLIPV (70 aa).

The protein belongs to the polyribonucleotide nucleotidyltransferase family. Mg(2+) serves as cofactor.

Its subcellular location is the cytoplasm. The enzyme catalyses RNA(n+1) + phosphate = RNA(n) + a ribonucleoside 5'-diphosphate. In terms of biological role, involved in mRNA degradation. Catalyzes the phosphorolysis of single-stranded polyribonucleotides processively in the 3'- to 5'-direction. The chain is Polyribonucleotide nucleotidyltransferase from Rhodococcus jostii (strain RHA1).